The sequence spans 502 residues: Lysine--tRNA ligase (502 aa).

Mg(2+)-binding residues include Glu-412 and Glu-419.

It belongs to the class-II aminoacyl-tRNA synthetase family. Homodimer. Mg(2+) serves as cofactor.

Its subcellular location is the cytoplasm. The catalysed reaction is tRNA(Lys) + L-lysine + ATP = L-lysyl-tRNA(Lys) + AMP + diphosphate. This chain is Lysine--tRNA ligase, found in Nitrosomonas europaea (strain ATCC 19718 / CIP 103999 / KCTC 2705 / NBRC 14298).